The primary structure comprises 85 residues: MGEDMEKTMRFGFDKEKNTKHKALLLTIYEALQEKGYNPINQLVGYLLSGDPAYITSHKNARNLIRKIERDELLEELLKVYLERE.

This sequence belongs to the UPF0297 family.

This Carboxydothermus hydrogenoformans (strain ATCC BAA-161 / DSM 6008 / Z-2901) protein is UPF0297 protein CHY_0540.